The following is a 151-amino-acid chain: 3-hydroxyacyl-[acyl-carrier-protein] dehydratase FabZ (151 aa).

Residue His56 is part of the active site.

It belongs to the thioester dehydratase family. FabZ subfamily.

The protein resides in the cytoplasm. The catalysed reaction is a (3R)-hydroxyacyl-[ACP] = a (2E)-enoyl-[ACP] + H2O. Its function is as follows. Involved in unsaturated fatty acids biosynthesis. Catalyzes the dehydration of short chain beta-hydroxyacyl-ACPs and long chain saturated and unsaturated beta-hydroxyacyl-ACPs. This chain is 3-hydroxyacyl-[acyl-carrier-protein] dehydratase FabZ, found in Rhodopseudomonas palustris (strain BisB18).